Here is a 103-residue protein sequence, read N- to C-terminus: MAAVSLSVSTVKPLGDRVFVKISESEEKTAGGILLPDTAKEKPQVGEVVQVGPGKSNDDGSRQAPEVGIGDKVLYSKYAGTDIKLGSDEYVLLSEKDILAVVG.

Belongs to the GroES chaperonin family. Heptamer of 7 subunits arranged in a ring. Interacts with the chaperonin GroEL.

It is found in the cytoplasm. Together with the chaperonin GroEL, plays an essential role in assisting protein folding. The GroEL-GroES system forms a nano-cage that allows encapsulation of the non-native substrate proteins and provides a physical environment optimized to promote and accelerate protein folding. GroES binds to the apical surface of the GroEL ring, thereby capping the opening of the GroEL channel. In Synechococcus sp. (strain CC9311), this protein is Co-chaperonin GroES.